Here is a 408-residue protein sequence, read N- to C-terminus: Guanine nucleotide-binding protein alpha-14 subunit (408 aa).

Residues 39–46, 79–86, 201–205, 216–222, 241–245, 285–288, 325–328, and Ala380 contribute to the GTP site; these read HSEELEAK, GGPLSGKS, TRIAD, VHSRKAT, DVGGQ, FPKF, and NKVD. Residues 71-408 enclose the G-alpha domain; it reads SHIKILILGG…KANAKATGLS (338 aa). The G1 motif stretch occupies residues 74-87; it reads KILILGGPLSGKST. Ser86 is a binding site for Mg(2+). Residues 214-222 are G2 motif; it reads DIVHSRKAT. Position 222 (Thr222) interacts with Mg(2+). The interval 237-246 is G3 motif; that stretch reads LLMIDVGGQR. Positions 321-328 are G4 motif; it reads LLFFNKVD. A G5 motif region spans residues 378 to 383; it reads TTATNT.

It belongs to the G-alpha family. G proteins are composed of 3 units; alpha, beta and gamma. The alpha chain contains the guanine nucleotide binding site. Interacts with the dopamine receptor dop-2 (via C-terminus); the interaction is direct.

Functionally, guanine nucleotide-binding proteins (G proteins) are involved as modulators or transducers in various transmembrane signaling systems. In association with the G-protein coupled dopamine receptor dop-2, modulates two types of learning: touch habituation and chemosensory associative conditioning. The polypeptide is Guanine nucleotide-binding protein alpha-14 subunit (Caenorhabditis elegans).